A 138-amino-acid chain; its full sequence is Thyrotropin subunit beta (138 aa).

The N-terminal stretch at 1–20 is a signal peptide; that stretch reads MTAIFLMSVLFGLACGQAMS. Disulfide bonds link Cys22–Cys72, Cys36–Cys87, Cys39–Cys125, Cys47–Cys103, Cys51–Cys105, and Cys108–Cys115. A glycan (N-linked (GlcNAc...) asparagine) is linked at Asn43. The propeptide occupies 133–138; sequence VVGLSI.

It belongs to the glycoprotein hormones subunit beta family. In terms of assembly, heterodimer of a common alpha chain and a unique beta chain which confers biological specificity to thyrotropin, lutropin, follitropin and gonadotropin.

Its subcellular location is the secreted. Indispensable for the control of thyroid structure and metabolism. The sequence is that of Thyrotropin subunit beta (TSHB) from Lama glama (Llama).